A 461-amino-acid polypeptide reads, in one-letter code: tRNA(Ile)-lysidine synthase (461 aa).

26-31 (SGGPDS) contacts ATP.

The protein belongs to the tRNA(Ile)-lysidine synthase family.

The protein resides in the cytoplasm. The catalysed reaction is cytidine(34) in tRNA(Ile2) + L-lysine + ATP = lysidine(34) in tRNA(Ile2) + AMP + diphosphate + H(+). In terms of biological role, ligates lysine onto the cytidine present at position 34 of the AUA codon-specific tRNA(Ile) that contains the anticodon CAU, in an ATP-dependent manner. Cytidine is converted to lysidine, thus changing the amino acid specificity of the tRNA from methionine to isoleucine. In Clostridium acetobutylicum (strain ATCC 824 / DSM 792 / JCM 1419 / IAM 19013 / LMG 5710 / NBRC 13948 / NRRL B-527 / VKM B-1787 / 2291 / W), this protein is tRNA(Ile)-lysidine synthase.